The following is a 162-amino-acid chain: NADH-quinone oxidoreductase subunit I (162 aa).

4Fe-4S ferredoxin-type domains are found at residues 53–83 (LRRY…IEAE) and 93–122 (TRYD…ETRI). The [4Fe-4S] cluster site is built by Cys-63, Cys-66, Cys-69, Cys-73, Cys-102, Cys-105, Cys-108, and Cys-112.

This sequence belongs to the complex I 23 kDa subunit family. In terms of assembly, NDH-1 is composed of 14 different subunits. Subunits NuoA, H, J, K, L, M, N constitute the membrane sector of the complex. It depends on [4Fe-4S] cluster as a cofactor.

Its subcellular location is the cell inner membrane. The catalysed reaction is a quinone + NADH + 5 H(+)(in) = a quinol + NAD(+) + 4 H(+)(out). Functionally, NDH-1 shuttles electrons from NADH, via FMN and iron-sulfur (Fe-S) centers, to quinones in the respiratory chain. The immediate electron acceptor for the enzyme in this species is believed to be ubiquinone. Couples the redox reaction to proton translocation (for every two electrons transferred, four hydrogen ions are translocated across the cytoplasmic membrane), and thus conserves the redox energy in a proton gradient. The chain is NADH-quinone oxidoreductase subunit I from Dechloromonas aromatica (strain RCB).